A 777-amino-acid chain; its full sequence is Shutoff protein (777 aa).

Disordered stretches follow at residues 1–55 (MEED…SVPV) and 261–283 (PLDSDQPEQNSEDGQPVVSDDDL). Polar residues predominate over residues 9–20 (QPDSETLTSPTS). A binding to host EIF4G region spans residues 250–314 (VMDHLLIKRV…VILVTVELEC (65 aa)). The 119-residue stretch at 317–435 (RFFANPQTLR…ELWTAFSERT (119 aa)) folds into the RRM domain. Phosphotyrosine; by host is present on residues Y334 and Y649. The disordered stretch occupies residues 652-777 (PQTGEELNTP…AAARLVESQP (126 aa)). Residues 656–665 (EELNTPSPSA) are compositionally biased toward polar residues. A compositionally biased stretch (gly residues) spans 728–738 (GAGGQTPQGRG). Positions 753–763 (TRSEPASDGES) are enriched in basic and acidic residues.

It belongs to the adenoviridae shutoff protein family. Monomer. Interacts with hexon protein; this interaction allows chaperoning and trimerization of hexon proteins. Interacts (via N-terminus) with host initiation factor EIF4G (via C-terminus). Interacts (via RRM domain) with viral mRNAs that contain the tripartite leader; this interaction allows ribosome shunting and expression of viral late mRNAs. In terms of processing, might be cleaved by the viral protease. Post-translationally, phosphorylated. Tyrosine phosphorylation enhances preferential binding to tripartite leader mRNAs and allows ribosome shunting. Methylated. Asymmetric dimethylation by host PRMT1 of the Arg/Gly-rich region may regulate shutoff protein binding to hexon and promote the capsid assembly in the nucleus.

It localises to the host cytoplasm. Protein that inhibits host translation while promoting late viral translation by ribosome shunting. Blocks host cap-dependent translation by binding to eIF4G, displacing MKNK1 from cap initiation complexes and preventing EIF4E phosphorylation. Binds to the tripartite leader sequence of viral late mRNAs and recruits host eIF4G, PABPC1/poly-A binding protein and 40S ribosomes subunits on viral mRNAs, allowing ribosome shunting and efficient translation of late viral mRNAs even though conventional translation via ribosome scanning from the cap has been shut off in the host cell. During assembly, acts as a chaperone protein that helps hexon proteins assembly into trimers. The polypeptide is Shutoff protein (Homo sapiens (Human)).